A 429-amino-acid polypeptide reads, in one-letter code: Glutamate-1-semialdehyde 2,1-aminomutase 2 (429 aa).

At Lys268 the chain carries N6-(pyridoxal phosphate)lysine.

The protein belongs to the class-III pyridoxal-phosphate-dependent aminotransferase family. HemL subfamily. Homodimer. Pyridoxal 5'-phosphate is required as a cofactor.

It localises to the cytoplasm. It catalyses the reaction (S)-4-amino-5-oxopentanoate = 5-aminolevulinate. It functions in the pathway porphyrin-containing compound metabolism; protoporphyrin-IX biosynthesis; 5-aminolevulinate from L-glutamyl-tRNA(Glu): step 2/2. This is Glutamate-1-semialdehyde 2,1-aminomutase 2 from Listeria monocytogenes serotype 4a (strain HCC23).